Consider the following 100-residue polypeptide: Urease subunit gamma (100 aa).

Belongs to the urease gamma subunit family. In terms of assembly, heterotrimer of UreA (gamma), UreB (beta) and UreC (alpha) subunits. Three heterotrimers associate to form the active enzyme.

The protein resides in the cytoplasm. It catalyses the reaction urea + 2 H2O + H(+) = hydrogencarbonate + 2 NH4(+). The protein operates within nitrogen metabolism; urea degradation; CO(2) and NH(3) from urea (urease route): step 1/1. This chain is Urease subunit gamma, found in Nitrosococcus oceani (strain ATCC 19707 / BCRC 17464 / JCM 30415 / NCIMB 11848 / C-107).